The sequence spans 323 residues: D-alanine--D-alanine ligase (323 aa).

The 201-residue stretch at 105-305 folds into the ATP-grasp domain; sequence KQQLVPRGIP…YEDLVEAIVE (201 aa). 131–188 is a binding site for ATP; sequence PLARPYVLKPVNEGSSVGVAIVTDESNYGNPIRRDAPGPWQEFRELLAEPFIRGRELT. Aspartate 256, glutamate 272, and asparagine 274 together coordinate Mg(2+).

It belongs to the D-alanine--D-alanine ligase family. Mg(2+) serves as cofactor. The cofactor is Mn(2+).

It is found in the cytoplasm. It carries out the reaction 2 D-alanine + ATP = D-alanyl-D-alanine + ADP + phosphate + H(+). It participates in cell wall biogenesis; peptidoglycan biosynthesis. Its function is as follows. Cell wall formation. The sequence is that of D-alanine--D-alanine ligase from Erythrobacter litoralis (strain HTCC2594).